The sequence spans 540 residues: Homoserine O-acetyltransferase (540 aa).

Residues 66–404 form the AB hydrolase-1 domain; sequence NVILICHALT…QHGHDAFLLE (339 aa). Serine 171 serves as the catalytic Nucleophile. Arginine 240 provides a ligand contact to substrate. The disordered stretch occupies residues 262–284; that stretch reads QDTDKSGIKGTTGTEGKNSSEIS. Residues aspartate 365 and histidine 398 contribute to the active site. Residue aspartate 399 coordinates substrate. 2 CBS domains span residues 425 to 484 and 486 to 540; these read MNRN…ELDE and ITRD…GKYD.

The protein belongs to the AB hydrolase superfamily. MetX family. As to quaternary structure, homodimer.

Its subcellular location is the cytoplasm. The enzyme catalyses L-homoserine + acetyl-CoA = O-acetyl-L-homoserine + CoA. It functions in the pathway amino-acid biosynthesis; L-methionine biosynthesis via de novo pathway; O-acetyl-L-homoserine from L-homoserine: step 1/1. Its function is as follows. Transfers an acetyl group from acetyl-CoA to L-homoserine, forming acetyl-L-homoserine. In vitro, can also use propionyl-CoA or butiryl-CoA as acyl donor. The chain is Homoserine O-acetyltransferase from Methanosarcina acetivorans (strain ATCC 35395 / DSM 2834 / JCM 12185 / C2A).